Here is a 79-residue protein sequence, read N- to C-terminus: MAERSQHLQDVFLNTVRKQKISLTIFLVNGVKLTGIVTSFDSFCVLLRRDGHAQLVYKHAISTIMPGQPVQMFEGESPE.

Positions 10 to 70 constitute a Sm domain; it reads DVFLNTVRKQ…ISTIMPGQPV (61 aa).

This sequence belongs to the Hfq family. As to quaternary structure, homohexamer.

Its function is as follows. RNA chaperone that binds small regulatory RNA (sRNAs) and mRNAs to facilitate mRNA translational regulation in response to envelope stress, environmental stress and changes in metabolite concentrations. Also binds with high specificity to tRNAs. The polypeptide is RNA-binding protein Hfq (Bartonella tribocorum (strain CIP 105476 / IBS 506)).